Consider the following 207-residue polypeptide: Venom allergen 5 (207 aa).

3 disulfides stabilise this stretch: C4/C16, C8/C105, and C29/C97. The SCP domain occupies 49 to 192; the sequence is DEHNRFRQKV…MKSHYLVCNY (144 aa). Y111 is modified (phosphotyrosine). An N-linked (Glc) (glycation) lysine glycan is attached at K141. A disulfide bridge connects residues C173 and C190.

Belongs to the CRISP family. Venom allergen 5-like subfamily. Glycosylated. Expressed by the venom gland.

The protein resides in the secreted. The chain is Venom allergen 5 from Polybia paulista (Neotropical social wasp).